We begin with the raw amino-acid sequence, 343 residues long: Endoplasmic reticulum-resident calcium binding protein (343 aa).

The first 26 residues, 1-26 (MMKINLYKLLCFICVIFLLHKNVVRS), serve as a signal peptide directing secretion. EF-hand domains follow at residues 59–94 (GAKE…LKNE), 95–130 (IFLK…NLDA), 135–170 (KHSE…MKDE), 172–207 (LKEL…ESSG), and 210–245 (KDDE…PAHE). The Ca(2+) site is built by aspartate 72, asparagine 74, aspartate 76, glutamate 78, glutamate 83, aspartate 108, aspartate 110, aspartate 112, glutamate 119, aspartate 148, aspartate 150, aspartate 152, lysine 154, glutamate 159, aspartate 185, asparagine 187, aspartate 189, lysine 191, glutamate 196, aspartate 223, asparagine 225, aspartate 227, and glutamate 234. Positions 313–331 (EDDDMDADNTEDDKDEADD) are enriched in acidic residues. The interval 313–343 (EDDDMDADNTEDDKDEADDASQQKSPAIDEL) is disordered.

It belongs to the CREC family.

The protein localises to the endoplasmic reticulum. Its function is as follows. Calcium-binding protein. Required for schizont to ring transition. Required for the breakdown of the parasitophorous vacuole membrane during egress. Required for the proteolytic maturation of apical membrane antigen 1 (AMA-1) during egress. Required for the proteolytic maturation of subtilisin-like protease 1 (SUB1) during egress. Required for the proteolytic maturation of plasmepsin X (PMX) during egress. The protein is Endoplasmic reticulum-resident calcium binding protein of Plasmodium falciparum (isolate 3D7).